Reading from the N-terminus, the 670-residue chain is Acetyl-coenzyme A synthetase (670 aa).

CoA contacts are provided by residues 205–208 (RRGK) and Thr-326. ATP contacts are provided by residues 402 to 404 (GEP), 426 to 431 (STWWMT), Asp-517, Arg-532, and Arg-543. Mg(2+) contacts are provided by Val-554, His-556, and Val-559. Arg-601 is a CoA binding site. Position 626 is an N6-acetyllysine (Lys-626).

Belongs to the ATP-dependent AMP-binding enzyme family. The cofactor is Mg(2+). Post-translationally, acetylated. Deacetylation by the SIR2-homolog deacetylase activates the enzyme.

It catalyses the reaction acetate + ATP + CoA = acetyl-CoA + AMP + diphosphate. In terms of biological role, catalyzes the conversion of acetate into acetyl-CoA (AcCoA), an essential intermediate at the junction of anabolic and catabolic pathways. AcsA undergoes a two-step reaction. In the first half reaction, AcsA combines acetate with ATP to form acetyl-adenylate (AcAMP) intermediate. In the second half reaction, it can then transfer the acetyl group from AcAMP to the sulfhydryl group of CoA, forming the product AcCoA. This Pyrobaculum arsenaticum (strain DSM 13514 / JCM 11321 / PZ6) protein is Acetyl-coenzyme A synthetase.